The chain runs to 93 residues: Putative protein adenylyltransferase MJ0435 (93 aa).

The short motif at 26 to 40 (GSYARNEQKETSDID) is the GSX(10)DXD motif element. Residues D38, D40, and D70 each coordinate Mg(2+).

It belongs to the MntA antitoxin family. As to quaternary structure, probably forms a complex with cognate toxin MJ0434. It depends on Mg(2+) as a cofactor.

The catalysed reaction is L-tyrosyl-[protein] + ATP = O-(5'-adenylyl)-L-tyrosyl-[protein] + diphosphate. It carries out the reaction O-(5'-adenylyl)-L-tyrosyl-[protein] + ATP = O-[5'-(adenylyl-(5'-&gt;3')-adenylyl)]-L-tyrosyl-[protein] + diphosphate. Functionally, probable antitoxin component of a putative type VII toxin-antitoxin (TA) system. Neutralizes cognate toxic MJ0434 by di-AMPylation. This Methanocaldococcus jannaschii (strain ATCC 43067 / DSM 2661 / JAL-1 / JCM 10045 / NBRC 100440) (Methanococcus jannaschii) protein is Putative protein adenylyltransferase MJ0435.